The primary structure comprises 287 residues: uncharacterized protein (287 aa).

Residues 1 to 31 (MLGSMALKLRKWIWASIPSLALILSSCSALV) form the signal peptide.

Belongs to the MG439/MG440 family.

This is an uncharacterized protein from Mycoplasma pneumoniae (strain ATCC 29342 / M129 / Subtype 1) (Mycoplasmoides pneumoniae).